Reading from the N-terminus, the 460-residue chain is Anthocyanidin 3-O-glucoside 5-O-glucosyltransferase 1 (460 aa).

An N-terminal signal peptide occupies residues 1–22 (MVRRRVLLATFPAQGHINPALQ). Residue histidine 16 is the Proton acceptor of the active site. Histidine 16 contributes to the an anthocyanidin binding site. UDP-alpha-D-glucose is bound by residues glutamine 338, histidine 353, tryptophan 356, asparagine 357, serine 358, glutamate 361, aspartate 377, and glutamine 378.

Belongs to the UDP-glycosyltransferase family.

It catalyses the reaction an anthocyanidin 3-O-beta-D-glucoside + UDP-alpha-D-glucose = an anthocyanidin 3,5-di-O-beta-D-glucoside + UDP + 2 H(+). The protein operates within pigment biosynthesis; anthocyanin biosynthesis. Its function is as follows. Catalyzes the glucosylation at the O-5 position of anthocyanidin 3-glucosides to form anthocyanidin 3,5-di-O-glucosides using UDP-glucose as sugar donor. Anthocyanidin 3,5-di-O-glucosides are molecules that are responsible for pigmentation. Also acts on anthocyanidin 3-O-(6-O-malonylglucoside). Much less active with hydroxycinnamoylglucose derivatives. No activity in the absence of the 3-O-glucoside group. This Perilla frutescens (Beefsteak mint) protein is Anthocyanidin 3-O-glucoside 5-O-glucosyltransferase 1 (PF3R4).